We begin with the raw amino-acid sequence, 136 residues long: Small ribosomal subunit protein uS9 (136 aa).

The protein belongs to the universal ribosomal protein uS9 family.

The polypeptide is Small ribosomal subunit protein uS9 (Borrelia recurrentis (strain A1)).